A 347-amino-acid chain; its full sequence is MNTPAQKKITIVDTTLRDGMSSVSHQFTPQNVADIARGLDKAGVGTIEVAHGIGLGASSIQYGFAAATDPDYVRAAVDAVENADIAALYVPGIATLAELQKAIDAGIKTVRVAVHCTEADCGQQPVEWAKEQGLTVMTFLMMSHKLDPEPLAEQAAKLDSYGADVVYVVDSAGAMVPQHAGDRVAALRQVITADIGFHAHNNLGVGIANALTAAENGATFIDGSLRGLGASAGNAQTEVLAAAFERAGWDTGVDLFPLIDTAEHIVAPLMKEPQIVDETALILGYAGVYSTFFHPTKRAAKKFGVPARDILMELGRRGVIGGQEDMIIDVASELAGRTYETPALAGS.

The region spanning 9-259 is the Pyruvate carboxyltransferase domain; it reads ITIVDTTLRD…DTGVDLFPLI (251 aa). Substrate contacts are provided by residues 17–18, serine 171, and histidine 198; that span reads RD. Aspartate 18 is a Mn(2+) binding site. The Mn(2+) site is built by histidine 198 and histidine 200. Tyrosine 289 provides a ligand contact to substrate.

The protein belongs to the 4-hydroxy-2-oxovalerate aldolase family.

It catalyses the reaction (S)-4-hydroxy-2-oxopentanoate = acetaldehyde + pyruvate. This Rhodococcus opacus (strain B4) protein is 4-hydroxy-2-oxovalerate aldolase 4.